The primary structure comprises 324 residues: Cytochrome f (324 aa).

Positions 1–30 are cleaved as a signal peptide; that stretch reads MNMRFSPKALVRQLGRLSLVACLSLGLLGA. The heme site is built by Tyr-42, Cys-62, Cys-65, and His-66. Residues 290 to 310 traverse the membrane as a helical segment; the sequence is VLGVIAFFFAVMLAQIMLVLK.

Belongs to the cytochrome f family. In terms of assembly, the 4 large subunits of the cytochrome b6-f complex are cytochrome b6, subunit IV (17 kDa polypeptide, PetD), cytochrome f and the Rieske protein, while the 4 small subunits are PetG, PetL, PetM and PetN. The complex functions as a dimer. The cofactor is heme.

It localises to the cellular thylakoid membrane. In terms of biological role, component of the cytochrome b6-f complex, which mediates electron transfer between photosystem II (PSII) and photosystem I (PSI), cyclic electron flow around PSI, and state transitions. The protein is Cytochrome f of Synechococcus elongatus (strain ATCC 33912 / PCC 7942 / FACHB-805) (Anacystis nidulans R2).